The sequence spans 186 residues: Large ribosomal subunit protein uL5 (186 aa).

It belongs to the universal ribosomal protein uL5 family. Part of the 50S ribosomal subunit; contacts the 5S rRNA and probably tRNA. Forms a bridge to the 30S subunit in the 70S ribosome.

In terms of biological role, this is one of the proteins that bind and probably mediate the attachment of the 5S RNA into the large ribosomal subunit, where it forms part of the central protuberance. In the 70S ribosome it contacts protein S13 of the 30S subunit (bridge B1b), connecting the 2 subunits; this bridge is implicated in subunit movement. May contact the P site tRNA; the 5S rRNA and some of its associated proteins might help stabilize positioning of ribosome-bound tRNAs. The sequence is that of Large ribosomal subunit protein uL5 from Methanopyrus kandleri (strain AV19 / DSM 6324 / JCM 9639 / NBRC 100938).